A 200-amino-acid polypeptide reads, in one-letter code: Rho GDP-dissociation inhibitor 2 (200 aa).

Residues 1-39 form a disordered region; the sequence is MTEKDAQPQLEEADDDLDSKLNYKPPPQKSLKELQEMDK. T2 bears the N-acetylthreonine mark. K20 carries the post-translational modification N6-acetyllysine. Residue Y23 is modified to Phosphotyrosine. K24, K39, K46, K101, and K123 each carry N6-acetyllysine. Residues 30 to 39 show a composition bias toward basic and acidic residues; it reads SLKELQEMDK. Residue S144 is modified to Phosphoserine. K174 carries the post-translational modification N6-acetyllysine.

The protein belongs to the Rho GDI family. In terms of assembly, interacts with RHOA. Interacts with RAC1. Interacts with RAC2. Interacts with CDC42. In terms of tissue distribution, preferentially expressed in hematopoietic cells.

Its subcellular location is the cytoplasm. It is found in the cytosol. Functionally, regulates the GDP/GTP exchange reaction of the Rho proteins by inhibiting the dissociation of GDP from them, and the subsequent binding of GTP to them. Regulates reorganization of the actin cytoskeleton mediated by Rho family members. This chain is Rho GDP-dissociation inhibitor 2 (Arhgdib), found in Mus musculus (Mouse).